The sequence spans 2472 residues: Nuclear receptor corepressor 2 (2472 aa).

Disordered regions lie at residues 1–20, 47–168, and 190–220; these read MSGS…PRYP, RDYT…SRLS, and ISKL…PPIE. Arginine 18 bears the Asymmetric dimethylarginine mark. Residues 51 to 60 show a composition bias toward polar residues; the sequence is SHLSPGSIIQ. Serine 54 and serine 67 each carry phosphoserine. 2 stretches are compositionally biased toward basic and acidic residues: residues 78-88 and 96-112; these read RSQELHLRPES and GKPD…RLEL. A phosphoserine mark is found at serine 149 and serine 152. Residues 165-207 adopt a coiled-coil conformation; sequence SRLSKEELIQNMDRVDREITMVEQQISKLKKKQQQLEEEAAKP. Residues 203 to 212 show a composition bias toward basic and acidic residues; the sequence is EAAKPPEPEK. A Phosphoserine modification is found at serine 215. An interaction with SIN3A/B region spans residues 254 to 312; that stretch reads LPLYNQPSDTRQYHENIKINQAMRKKLILYFKRRNHARKQWEQRFCQRYDQLMEAWEKK. Positions 389–480 are deacetylase activation domain (DAD); that stretch reads MRQLAVIPPM…YLTKKNENYK (92 aa). The 52-residue stretch at 427-478 folds into the SANT 1 domain; sequence QVTNMWSEQERDTFREKFMQHPKNFGLIASFLERKTVAECVLYYYLTKKNEN. Lysine 449, tyrosine 470, and tyrosine 471 together coordinate 1D-myo-inositol 1,4,5,6-tetrakisphosphate. 3 disordered regions span residues 487–618, 665–1107, and 1173–1197; these read YRRR…EMET, HKLK…RPPI, and SATS…YRGS. The stretch at 492–560 forms a coiled coil; the sequence is KSQQQQQQQQ…GEDNDEKEAV (69 aa). Position 493 is a phosphoserine (serine 493). Residues 494 to 507 are compositionally biased toward low complexity; sequence QQQQQQQQQQQQQQ. Basic and acidic residues predominate over residues 512-548; that stretch reads SQEEKEEKEKEKEADKEEEKQDAENEKEELSKEKTDD. Threonine 549 bears the Phosphothreonine mark. A Phosphoserine modification is found at serine 550. Residues 592-609 are compositionally biased toward polar residues; the sequence is ATPQQSSELASMEMNESS. The SANT 2 domain occupies 606–657; the sequence is NESSRWTEEEMETAKKGLLEHGRNWSAIARMVGSKTVSQCKNFYFNYKKRQN. Residues 658-682 are a coiled coil; the sequence is LDEILQQHKLKMEKERNARRKKKKT. Residues 709–718 are compositionally biased toward acidic residues; the sequence is NEEELAEEAE. A compositionally biased stretch (polar residues) spans 739–750; that stretch reads VNNSSDTESVPS. Residues serine 747 and serine 750 each carry the phosphoserine modification. Pro residues-rich tracts occupy residues 773 to 782 and 789 to 811; these read TQPPVPPPEE and EPSP…PAAP. Composition is skewed to basic and acidic residues over residues 831-850 and 859-868; these read EDAK…KPEE and ESVKSDHKEE. An N6-acetyllysine modification is found at lysine 878. Positions 905-919 are enriched in low complexity; sequence GSSSGATQDSDSSAT. Serine 938 carries the phosphoserine modification. Threonine 945 is modified (phosphothreonine). Position 955 is a phosphoserine (serine 955). Residue lysine 958 is modified to N6-acetyllysine. Over residues 978 to 988 the composition is skewed to basic and acidic residues; sequence KVHEPPREDTV. Positions 989-1000 are enriched in pro residues; it reads PPKPVPPVPPPT. Over residues 1090-1101 the composition is skewed to low complexity; sequence LPLGLHDSARPV. An N6-acetyllysine mark is found at lysine 1181 and lysine 1209. Serine 1220 carries the phosphoserine modification. Disordered stretches follow at residues 1254–1277, 1345–1378, and 1410–1443; these read SVSQ…AAPK, LKRE…LKLK, and PLAP…KHDV. Threonine 1350 is subject to Phosphothreonine. A compositionally biased stretch (basic and acidic residues) spans 1359–1368; that stretch reads DLTETYKPRP. A phosphoserine mark is found at serine 1449, serine 1509, and serine 1565. Residues 1479-1578 form a disordered region; it reads KSRSGTSSGA…TVPEHHPHPI (100 aa). Arginine 1624 carries the post-translational modification Asymmetric dimethylarginine. The disordered stretch occupies residues 1734-1826; the sequence is TAPPPFSSRH…PISPRTQDAL (93 aa). The segment covering 1740–1753 has biased composition (low complexity); sequence SSRHSSSPLSPGGP. 2 positions are modified to phosphoserine: serine 1746 and serine 1749. Over residues 1765-1778 the composition is skewed to basic and acidic residues; sequence SERERERERERDKS. Polar residues predominate over residues 1807–1826; that stretch reads RPASHTHQHSPISPRTQDAL. Serine 1819 is modified (phosphoserine). Arginine 1854 bears the Omega-N-methylarginine mark. Disordered stretches follow at residues 1857 to 1878, 1898 to 1986, and 2001 to 2078; these read RSTS…THCP, KETS…KPFS, and AGYS…LQTA. The span at 1899 to 1913 shows a compositional bias: basic and acidic residues; it reads ETSRVARPERPRVDA. Lysine 1920 is subject to N6-acetyllysine. A compositionally biased stretch (low complexity) spans 1925 to 1938; that stretch reads EPASSPSKSSEPRS. Residue serine 1963 is modified to Phosphoserine. The residue at position 1983 (lysine 1983) is an N6-acetyllysine. Serine 2004, serine 2012, serine 2015, serine 2016, and serine 2018 each carry phosphoserine. Threonine 2020 is subject to Phosphothreonine. A compositionally biased stretch (basic and acidic residues) spans 2020–2043; it reads THDKGLSKPLEELEKSHLEGELRH. Residue serine 2035 is modified to Phosphoserine. A compositionally biased stretch (low complexity) spans 2064-2075; sequence LPESQPSSSPLL. The tract at residues 2086–2090 is required for interaction with RARA in the absence of its ligand; sequence RVVTL. The CORNR box of ID1 motif lies at 2094-2098; sequence ISEVI. The segment at 2132-2226 is disordered; it reads RRPPSDLYLP…GNTSQPPAFF (95 aa). Phosphoserine occurs at positions 2161, 2181, and 2215. The CORNR box of ID2 motif lies at 2296–2300; the sequence is LEAII. Residues 2343-2459 are disordered; the sequence is GRSDHALTSP…HHAWDEEPKP (117 aa). At serine 2371 the chain carries Phosphoserine. Low complexity predominate over residues 2439–2450; it reads LAAGSGPLAGPH.

This sequence belongs to the N-CoR nuclear receptor corepressors family. Forms a large corepressor complex that contains SIN3A/B and histone deacetylases HDAC1 and HDAC2. This complex associates with the thyroid (TR) and the retinoid acid receptors (RAR) in the absence of ligand, and may stabilize their interaction with TFIIB. Interacts directly with RARA in the absence of ligand; the interaction represses RARA activity. Interacts (isoform SMRT) with HDAC10. Interacts with MINT. Component of the N-Cor repressor complex, at least composed of NCOR1, NCOR2, HDAC3, TBL1X, TBL1R, CORO2A and GPS2. Interacts with CBFA2T3 and ATXN1L. Interacts with RARB; the interaction is weak and does not repress RARB transactivational activity. Interacts (via 1D-myo-inositol 1,4,5,6-tetrakisphosphate) with HDAC3; promoting the histone deacetylase activity of HDAC3. Interacts with HDAC7 and C1D. Interacts with NR4A2; this interaction increases in the absence of PITX3. Interacts with BCL6 (via the BTB domain), required for BCL6 transcriptional repressor activity on a subset of target genes. Forms ternary complexes with BCOR and BCL6 on target gene promoters but, on enhancer elements, interacts with BCL6 and HDAC3 to repress proximal gene expression. May interact with DEAF1. Interacts with RXRA. Interacts with MECP2. Interacts with ZBTB7A. Interacts with AR. Interacts with TBL1Y. Interacts with SANBR (via the BTB domain). Ubiquitous. Also widely expressed in early embryos.

The protein resides in the nucleus. Its function is as follows. Transcriptional corepressor that mediates the transcriptional repression activity of some nuclear receptors by promoting chromatin condensation, thus preventing access of the basal transcription. Acts by recruiting chromatin modifiers, such as histone deacetylases HDAC1, HDAC2 and HDAC3. Required to activate the histone deacetylase activity of HDAC3. Involved in the regulation BCL6-dependent of the germinal center (GC) reactions, mainly through the control of the GC B-cells proliferation and survival. Recruited by ZBTB7A to the androgen response elements/ARE on target genes, negatively regulates androgen receptor signaling and androgen-induced cell proliferation. The chain is Nuclear receptor corepressor 2 (Ncor2) from Mus musculus (Mouse).